A 460-amino-acid chain; its full sequence is Ribosomal protein uS12 methylthiotransferase RimO (460 aa).

An MTTase N-terminal domain is found at 17 to 128; sequence PAVAVLHLGC…IVQVIQRAER (112 aa). 6 residues coordinate [4Fe-4S] cluster: C26, C62, C91, C166, C170, and C173. In terms of domain architecture, Radical SAM core spans 152–381; it reads TTHAPVAYLR…MQLQQGIAFR (230 aa). The TRAM domain maps to 384–450; the sequence is REQVGQVVPV…PYDLFGQVVE (67 aa).

Belongs to the methylthiotransferase family. RimO subfamily. [4Fe-4S] cluster is required as a cofactor.

It is found in the cytoplasm. It catalyses the reaction L-aspartate(89)-[ribosomal protein uS12]-hydrogen + (sulfur carrier)-SH + AH2 + 2 S-adenosyl-L-methionine = 3-methylsulfanyl-L-aspartate(89)-[ribosomal protein uS12]-hydrogen + (sulfur carrier)-H + 5'-deoxyadenosine + L-methionine + A + S-adenosyl-L-homocysteine + 2 H(+). In terms of biological role, catalyzes the methylthiolation of an aspartic acid residue of ribosomal protein uS12. This Synechococcus sp. (strain JA-3-3Ab) (Cyanobacteria bacterium Yellowstone A-Prime) protein is Ribosomal protein uS12 methylthiotransferase RimO.